The primary structure comprises 64 residues: Large ribosomal subunit protein bL35 (64 aa).

Belongs to the bacterial ribosomal protein bL35 family.

This Aliivibrio fischeri (strain ATCC 700601 / ES114) (Vibrio fischeri) protein is Large ribosomal subunit protein bL35.